Reading from the N-terminus, the 168-residue chain is Replicase polyprotein 1ab (168 aa).

The Nidovirus-type SAM-dependent 2'-O-MTase domain maps to 1–165 (PNTKSIDGEN…KLLNFGNHLV (165 aa)).

The replicase polyprotein of coronaviruses is a multifunctional protein: it contains the activities necessary for the transcription of negative stranded RNA, leader RNA, subgenomic mRNAs and progeny virion RNA as well as proteinases responsible for the cleavage of the polyprotein into functional products. The protein is Replicase polyprotein 1ab (rep) of Canine coronavirus (strain Insavc-1) (CCoV).